We begin with the raw amino-acid sequence, 220 residues long: MYKEGACLYRNPLRSKSDVKDWRMEGGGQISFDDHSLHLSHVQDEAHFVFWCPETFPDGIIVTWDFSPIEQPGLCMLFFAAAGIRGEDLFDPSLRKRTGTYPEYHSGDINALHLSYFRRKYAEERAFRTCNLRKSRGFHLAAMGADPLPSPDDADSPYRMKLIKDKGYVHFSINGLPILEWMDDGSTYGPVLTKGKIGFRQMAPMKAVYRDFAVHQAVRR.

This is an uncharacterized protein from Bacillus subtilis (strain 168).